Here is a 309-residue protein sequence, read N- to C-terminus: Heme A synthase (309 aa).

The Cytoplasmic portion of the chain corresponds to 1 to 6 (MTKKLK). The chain crosses the membrane as a helical span at residues 7 to 27 (ILSVISTICMIPLLLGGALVT). At 28–62 (KTGSADGCGNSWPLCEGQFLPTKISFEMFIELSHR) the chain is on the extracellular side. A disulfide bridge links Cys35 with Cys42. Residue Glu58 is part of the active site. His61 lines the heme o pocket. Residues 63-83 (GVTGVVGILIVYLTYLVWKEL) traverse the membrane as a helical segment. Residues 84 to 88 (RHNKE) are Cytoplasmic-facing. A helical transmembrane segment spans residues 89-109 (VVFLAFSALSLMILQALIGAA). Residues 110–123 (AVVWGQSDFALATH) are Extracellular-facing. Heme o is bound at residue His123. Residues 124 to 144 (FGISLVCFAAVFLLMLQLFEI) form a helical membrane-spanning segment. The Cytoplasmic segment spans residues 145 to 159 (DKKLHTEDIHINKTH). A helical transmembrane segment spans residues 160 to 180 (RIEIYAISFYTMCVVYSGALV). The Extracellular segment spans residues 181–211 (RHTDSNLACRDWPLCVNNSSFGISDYNFYQW). An intrachain disulfide couples Cys189 to Cys195. Residues 212 to 232 (VQMGHRLAAGILFIWTVILTI) traverse the membrane as a helical segment. His216 is a heme b binding site. At 233-247 (RMVKHYKNSKVFYWS) the chain is on the cytoplasmic side. A helical membrane pass occupies residues 248–268 (WLITLGLITLQVLFGALIIFT). Residues 269-271 (SLN) are Extracellular-facing. A helical membrane pass occupies residues 272–292 (LAIALFHALFITCYFGMLSFF). His278 lines the heme b pocket. The Cytoplasmic portion of the chain corresponds to 293-309 (MHLSFRAKRREKYSNQS).

Belongs to the COX15/CtaA family. Type 1 subfamily. As to quaternary structure, interacts with CtaB. Requires heme b as cofactor.

The protein resides in the cell membrane. The catalysed reaction is Fe(II)-heme o + 2 A + H2O = Fe(II)-heme a + 2 AH2. The protein operates within porphyrin-containing compound metabolism; heme A biosynthesis; heme A from heme O: step 1/1. Functionally, catalyzes the conversion of heme O to heme A by two successive hydroxylations of the methyl group at C8. The first hydroxylation forms heme I, the second hydroxylation results in an unstable dihydroxymethyl group, which spontaneously dehydrates, resulting in the formyl group of heme A. The chain is Heme A synthase from Oceanobacillus iheyensis (strain DSM 14371 / CIP 107618 / JCM 11309 / KCTC 3954 / HTE831).